Consider the following 175-residue polypeptide: MNFPKVGSKIQIQSYKHNGSIHRIWEETIVLKGTSKVVIGGNDRILVKESDGRHWRTREPAICYFDSEQWFNTIGMIRADGIYFYCNLGTPFTWDEEALKYIDYDLDIKVFPDMTFKLLDEDEYAMHRKMMKYPPEIDRILQRSVDELVSWIHQRKGPFAPQFVESWYERFLQYR.

R23 acts as the Proton donor in catalysis. Mg(2+) contacts are provided by N87, D103, D105, D107, D120, and E123.

The protein belongs to the Ntdp family. Mg(2+) serves as cofactor.

It carries out the reaction a ribonucleoside 5'-triphosphate + H2O = a ribonucleoside 5'-diphosphate + phosphate + H(+). It catalyses the reaction a ribonucleoside 5'-diphosphate + H2O = a ribonucleoside 5'-phosphate + phosphate + H(+). Functionally, has nucleoside phosphatase activity towards nucleoside triphosphates and nucleoside diphosphates. This Halalkalibacterium halodurans (strain ATCC BAA-125 / DSM 18197 / FERM 7344 / JCM 9153 / C-125) (Bacillus halodurans) protein is Nucleoside triphosphate/diphosphate phosphatase.